Consider the following 264-residue polypeptide: Acyl-[acyl-carrier-protein]--UDP-N-acetylglucosamine O-acyltransferase (264 aa).

Belongs to the transferase hexapeptide repeat family. LpxA subfamily. As to quaternary structure, homotrimer.

It localises to the cytoplasm. The enzyme catalyses a (3R)-hydroxyacyl-[ACP] + UDP-N-acetyl-alpha-D-glucosamine = a UDP-3-O-[(3R)-3-hydroxyacyl]-N-acetyl-alpha-D-glucosamine + holo-[ACP]. Its pathway is glycolipid biosynthesis; lipid IV(A) biosynthesis; lipid IV(A) from (3R)-3-hydroxytetradecanoyl-[acyl-carrier-protein] and UDP-N-acetyl-alpha-D-glucosamine: step 1/6. In terms of biological role, involved in the biosynthesis of lipid A, a phosphorylated glycolipid that anchors the lipopolysaccharide to the outer membrane of the cell. The protein is Acyl-[acyl-carrier-protein]--UDP-N-acetylglucosamine O-acyltransferase of Rickettsia rickettsii.